The chain runs to 606 residues: Electron transfer flavoprotein-ubiquinone oxidoreductase, mitochondrial (606 aa).

59–73 contributes to the FAD binding site; it reads VVIVGAGPSGLSTAI. A helical membrane pass occupies residues 448–468; sequence PSLHWGTIPGLIYGALEMYIF. [4Fe-4S] cluster-binding residues include cysteine 551, cysteine 575, cysteine 578, and cysteine 581.

It belongs to the ETF-QO/FixC family. Monomer. It depends on [4Fe-4S] cluster as a cofactor. FAD is required as a cofactor.

Its subcellular location is the mitochondrion inner membrane. It carries out the reaction a ubiquinone + reduced [electron-transfer flavoprotein] = a ubiquinol + oxidized [electron-transfer flavoprotein] + H(+). Accepts electrons from ETF and reduces ubiquinone. The protein is Electron transfer flavoprotein-ubiquinone oxidoreductase, mitochondrial (etfdh) of Dictyostelium discoideum (Social amoeba).